Reading from the N-terminus, the 82-residue chain is Modifier of protein aggregation 4 (82 aa).

Positions 1 to 23 (MTRGNQRDLAREKNQKKLADQKK) are enriched in basic and acidic residues. Disordered regions lie at residues 1–41 (MTRG…MDAR) and 63–82 (EAAA…PLKM).

It belongs to the SERF family.

Its subcellular location is the cytoplasm. It localises to the cytosol. The protein localises to the nucleus. Positive regulator of protein aggregation and age-related proteotoxicity. Induces conformational changes in aggregation-prone proteins, driving them into compact formations preceding the formation of aggregates. The chain is Modifier of protein aggregation 4 from Caenorhabditis elegans.